The sequence spans 213 residues: Small ribosomal subunit protein uS3 (213 aa).

Positions 38–106 (IRKYVKEKIF…EFALEVSEIR (69 aa)) constitute a KH type-2 domain.

This sequence belongs to the universal ribosomal protein uS3 family. As to quaternary structure, part of the 30S ribosomal subunit. Forms a tight complex with proteins S10 and S14.

In terms of biological role, binds the lower part of the 30S subunit head. Binds mRNA in the 70S ribosome, positioning it for translation. This chain is Small ribosomal subunit protein uS3, found in Maridesulfovibrio salexigens (strain ATCC 14822 / DSM 2638 / NCIMB 8403 / VKM B-1763) (Desulfovibrio salexigens).